The primary structure comprises 420 residues: Putative competence-damage inducible protein (420 aa).

It belongs to the CinA family.

The polypeptide is Putative competence-damage inducible protein (Lactiplantibacillus plantarum (strain ATCC BAA-793 / NCIMB 8826 / WCFS1) (Lactobacillus plantarum)).